The primary structure comprises 57 residues: UPF0391 membrane protein RPC_3278 (57 aa).

2 helical membrane-spanning segments follow: residues Trp4 to Ala24 and Ile30 to Leu50.

It belongs to the UPF0391 family.

It localises to the cell membrane. This chain is UPF0391 membrane protein RPC_3278, found in Rhodopseudomonas palustris (strain BisB18).